Consider the following 75-residue polypeptide: Small ribosomal subunit protein bS18 (75 aa).

Belongs to the bacterial ribosomal protein bS18 family. In terms of assembly, part of the 30S ribosomal subunit. Forms a tight heterodimer with protein bS6.

Binds as a heterodimer with protein bS6 to the central domain of the 16S rRNA, where it helps stabilize the platform of the 30S subunit. The protein is Small ribosomal subunit protein bS18 of Wigglesworthia glossinidia brevipalpis.